The sequence spans 340 residues: Serpentine receptor class alpha-18 (340 aa).

A run of 6 helical transmembrane segments spans residues Phe29–Ile49, Val109–Leu129, Phe149–Val169, Val198–Val218, Ile249–Ile269, and Ile285–Phe305.

It belongs to the nematode receptor-like protein sra family.

The protein localises to the membrane. The sequence is that of Serpentine receptor class alpha-18 (sra-18) from Caenorhabditis elegans.